Consider the following 89-residue polypeptide: Neuropeptide S (89 aa).

The first 23 residues, 1 to 23, serve as a signal peptide directing secretion; sequence MISSVKLNLILVLSLSTMHVFWC. Residues 24 to 67 constitute a propeptide that is removed on maturation; sequence YPVPSSKVSGKSDYFLILLNSCPTRLDRSKELAFLKPILEKMFV.

The protein localises to the secreted. In terms of biological role, modulates arousal and anxiety. May play an important anorexigenic role. Binds to its receptor NPSR1 with nanomolar affinity to increase intracellular calcium concentrations. This chain is Neuropeptide S (NPS), found in Homo sapiens (Human).